A 93-amino-acid polypeptide reads, in one-letter code: UPF0473 protein YrzB (93 aa).

The protein belongs to the UPF0473 family.

This Bacillus subtilis (strain 168) protein is UPF0473 protein YrzB (yrzB).